Reading from the N-terminus, the 350-residue chain is MMISSVLVAGVVAVSAALASKHPKQYSFKPEDAETIWNGDIPVLYDFGDSQSASYSGSWWTSSYITGTNGEQYLVISHYLDTPVFTYFRASTLNLETLDYNQFITLGNNTANSTTLDVKVGDNGIQSLTADNISQQRAYANDENVTFDITFDATSRVISNAGAGVFQFGPSITYEWGLPNCRTQGSVTDTGGKNITVDPAKSFTWYDRQWGTAAVTSGNWTWFQMHIPETSYKLSVWIIDNDVTNQFSRFATIRGDNDEFQVLPLEWKPIYDRTYQSTAADILYPLDWELDISGFGVFQLSSILDDQEIVGTTAIQTAYEGFVTFNGTVHNKKVQGYGLVEVVYSNWESL.

The first 19 residues, Met-1–Ala-19, serve as a signal peptide directing secretion.

As to quaternary structure, homodimer. In terms of processing, glycosylated.

The protein localises to the secreted. It catalyses the reaction kievitone hydrate = kievitone + H2O. Converts fungitoxic kievitone to the less toxic kievitone hydrate, and thereby protects the pathogenic fungus against this phytoalexin. The sequence is that of Kievitone hydratase (khs) from Fusarium solani subsp. phaseoli (Nectria haematococca).